The sequence spans 207 residues: Protein GrpE (207 aa).

Positions 1-11 (MTETDGQKDNN) are enriched in basic and acidic residues. The disordered stretch occupies residues 1–39 (MTETDGQKDNNQDTAQAAADPVVSKPYIMPDDPEEGSNE).

Belongs to the GrpE family. In terms of assembly, homodimer.

It localises to the cytoplasm. In terms of biological role, participates actively in the response to hyperosmotic and heat shock by preventing the aggregation of stress-denatured proteins, in association with DnaK and GrpE. It is the nucleotide exchange factor for DnaK and may function as a thermosensor. Unfolded proteins bind initially to DnaJ; upon interaction with the DnaJ-bound protein, DnaK hydrolyzes its bound ATP, resulting in the formation of a stable complex. GrpE releases ADP from DnaK; ATP binding to DnaK triggers the release of the substrate protein, thus completing the reaction cycle. Several rounds of ATP-dependent interactions between DnaJ, DnaK and GrpE are required for fully efficient folding. This Rhodopseudomonas palustris (strain TIE-1) protein is Protein GrpE.